The primary structure comprises 710 residues: Polyribonucleotide nucleotidyltransferase (710 aa).

The Mg(2+) site is built by Asp491 and Asp497. One can recognise a KH domain in the interval 559 to 618; the sequence is PRLITIKINPEKIRDVIGKGGAVIRALTEETGTQIDISDEGVVTIASVDAAAGQEAKRRI. The S1 motif domain maps to 628 to 696; sequence GKVYEGTVLK…DRGRLKLSMK (69 aa).

The protein belongs to the polyribonucleotide nucleotidyltransferase family. Mg(2+) serves as cofactor.

The protein localises to the cytoplasm. It catalyses the reaction RNA(n+1) + phosphate = RNA(n) + a ribonucleoside 5'-diphosphate. Functionally, involved in mRNA degradation. Catalyzes the phosphorolysis of single-stranded polyribonucleotides processively in the 3'- to 5'-direction. The sequence is that of Polyribonucleotide nucleotidyltransferase from Herminiimonas arsenicoxydans.